The following is a 213-amino-acid chain: Protein FAM156A/FAM156B (213 aa).

Met1 is modified (N-acetylmethionine). A disordered region spans residues 1–62 (MDPLQKRNPA…SQAVPLPEGL (62 aa)). Over residues 8-37 (NPASPSKSSPMTAAETSQEGPAPSQPSYSE) the composition is skewed to polar residues. Ser114 is modified (phosphoserine). Residues 154–170 (WETLVQGLSGLTLSLGT) traverse the membrane as a helical segment. Residues 165–198 (TLSLGTNQPGPLPEAALQPQETEEKRQRERQQES) form a disordered region. The span at 186 to 197 (TEEKRQRERQQE) shows a compositional bias: basic and acidic residues.

It localises to the membrane. The sequence is that of Protein FAM156A/FAM156B (FAM156A) from Homo sapiens (Human).